The chain runs to 277 residues: Large ribosomal subunit protein uL2 (277 aa).

Disordered regions lie at residues 36 to 55 (PLPK…RHHG) and 213 to 277 (WKGI…RKKK).

It belongs to the universal ribosomal protein uL2 family. As to quaternary structure, part of the 50S ribosomal subunit. Forms a bridge to the 30S subunit in the 70S ribosome.

Functionally, one of the primary rRNA binding proteins. Required for association of the 30S and 50S subunits to form the 70S ribosome, for tRNA binding and peptide bond formation. It has been suggested to have peptidyltransferase activity; this is somewhat controversial. Makes several contacts with the 16S rRNA in the 70S ribosome. The protein is Large ribosomal subunit protein uL2 of Staphylococcus saprophyticus subsp. saprophyticus (strain ATCC 15305 / DSM 20229 / NCIMB 8711 / NCTC 7292 / S-41).